Consider the following 492-residue polypeptide: Forkhead box protein O6 (492 aa).

Disordered regions lie at residues 1-76, 163-235, 315-338, and 466-492; these read MAAK…EVGP, SWWM…ASPA, GAGL…APRP, and FNFD…WVPG. The segment at residues 88–182 is a DNA-binding region (fork-head); sequence WGNLSYADLI…KTGKTPRRRA (95 aa). Phosphoserine is present on Ser184. Positions 192 to 203 are enriched in basic residues; sequence LRIKGKASKKKQ. A compositionally biased stretch (low complexity) spans 225–235; it reads PAAAKWAASPA. A compositionally biased stretch (pro residues) spans 472 to 486; sequence LPPPPPGLAGAPPPN.

In terms of processing, phosphorylation of Ser-184 is be important in regulating the transacriptional activity.

The protein resides in the cytoplasm. It localises to the nucleus. Functionally, transcriptional activator. The polypeptide is Forkhead box protein O6 (FOXO6) (Homo sapiens (Human)).